Reading from the N-terminus, the 370-residue chain is DNA replication and repair protein RecF (370 aa).

Residue 30–37 (GPNGSGKT) participates in ATP binding.

The protein belongs to the RecF family.

The protein resides in the cytoplasm. Functionally, the RecF protein is involved in DNA metabolism; it is required for DNA replication and normal SOS inducibility. RecF binds preferentially to single-stranded, linear DNA. It also seems to bind ATP. This is DNA replication and repair protein RecF from Prosthecochloris aestuarii (strain DSM 271 / SK 413).